A 56-amino-acid polypeptide reads, in one-letter code: Ribosome biogenesis protein Nop10 (56 aa).

It belongs to the NOP10 family.

In terms of biological role, involved in ribosome biogenesis; more specifically in 18S rRNA pseudouridylation and in cleavage of pre-rRNA. This is Ribosome biogenesis protein Nop10 from Saccharolobus islandicus (strain Y.N.15.51 / Yellowstone #2) (Sulfolobus islandicus).